The following is a 494-amino-acid chain: Glycerol kinase (494 aa).

Thr13 lines the ADP pocket. 3 residues coordinate ATP: Thr13, Thr14, and Ser15. Thr13 contacts sn-glycerol 3-phosphate. Arg17 contributes to the ADP binding site. Sn-glycerol 3-phosphate-binding residues include Arg83, Glu84, Tyr135, and Asp244. Positions 83, 84, 135, 244, and 245 each coordinate glycerol. ADP is bound by residues Thr266 and Gly309. The ATP site is built by Thr266, Gly309, Gln313, and Gly410. Positions 410 and 414 each coordinate ADP.

Belongs to the FGGY kinase family.

The enzyme catalyses glycerol + ATP = sn-glycerol 3-phosphate + ADP + H(+). It participates in polyol metabolism; glycerol degradation via glycerol kinase pathway; sn-glycerol 3-phosphate from glycerol: step 1/1. Its activity is regulated as follows. Inhibited by fructose 1,6-bisphosphate (FBP). In terms of biological role, key enzyme in the regulation of glycerol uptake and metabolism. Catalyzes the phosphorylation of glycerol to yield sn-glycerol 3-phosphate. The polypeptide is Glycerol kinase (Shewanella sp. (strain MR-4)).